The primary structure comprises 101 residues: Urease subunit beta (101 aa).

The protein belongs to the urease beta subunit family. Heterotrimer of UreA (gamma), UreB (beta) and UreC (alpha) subunits. Three heterotrimers associate to form the active enzyme.

The protein localises to the cytoplasm. The enzyme catalyses urea + 2 H2O + H(+) = hydrogencarbonate + 2 NH4(+). It participates in nitrogen metabolism; urea degradation; CO(2) and NH(3) from urea (urease route): step 1/1. The chain is Urease subunit beta from Ectopseudomonas mendocina (strain ymp) (Pseudomonas mendocina).